The primary structure comprises 85 residues: Small ribosomal subunit protein uS17 (85 aa).

The protein belongs to the universal ribosomal protein uS17 family. In terms of assembly, part of the 30S ribosomal subunit.

Functionally, one of the primary rRNA binding proteins, it binds specifically to the 5'-end of 16S ribosomal RNA. The chain is Small ribosomal subunit protein uS17 from Desulfosudis oleivorans (strain DSM 6200 / JCM 39069 / Hxd3) (Desulfococcus oleovorans).